Here is a 286-residue protein sequence, read N- to C-terminus: Energy-coupling factor transporter ATP-binding protein EcfA2 (286 aa).

The region spanning 3–246 is the ABC transporter domain; that stretch reads IRFDNVSYTY…KKKLADWHIG (244 aa). 40–47 is a binding site for ATP; that stretch reads GQTGSGKS.

This sequence belongs to the ABC transporter superfamily. Energy-coupling factor EcfA family. Forms a stable energy-coupling factor (ECF) transporter complex composed of 2 membrane-embedded substrate-binding proteins (S component), 2 ATP-binding proteins (A component) and 2 transmembrane proteins (T component).

The protein localises to the cell membrane. Functionally, ATP-binding (A) component of a common energy-coupling factor (ECF) ABC-transporter complex. Unlike classic ABC transporters this ECF transporter provides the energy necessary to transport a number of different substrates. In Staphylococcus aureus (strain USA300), this protein is Energy-coupling factor transporter ATP-binding protein EcfA2.